The sequence spans 181 residues: Adenine phosphoribosyltransferase 2 (181 aa).

S2 carries the N-acetylserine modification.

It belongs to the purine/pyrimidine phosphoribosyltransferase family.

Its subcellular location is the cytoplasm. It catalyses the reaction AMP + diphosphate = 5-phospho-alpha-D-ribose 1-diphosphate + adenine. Its pathway is purine metabolism; AMP biosynthesis via salvage pathway; AMP from adenine: step 1/1. Functionally, catalyzes a salvage reaction resulting in the formation of AMP, that is energically less costly than de novo synthesis. May lack catalytic activity. This chain is Adenine phosphoribosyltransferase 2 (APT2), found in Saccharomyces cerevisiae (strain ATCC 204508 / S288c) (Baker's yeast).